Consider the following 92-residue polypeptide: MADQLTVEIIAAIKNLAQSENGGRIPAAIGDITADRQLTSLGIDSLALADVLWDLEQAYGIRIEMNTADAWSNLKNIGDVVEAVRGLIAKEA.

The 85-residue stretch at 4-88 (QLTVEIIAAI…DVVEAVRGLI (85 aa)) folds into the Carrier domain. O-(pantetheine 4'-phosphoryl)serine is present on Ser45.

Post-translationally, 4'-phosphopantetheine is transferred from CoA to a specific serine of apo-NodF.

Functionally, proposed to synthesize nod factor fatty acyl chain. Involved in trans-2,trans-4,trans-6,cis-11-octadecatetraenoic acid biosynthesis. The polypeptide is Nodulation protein F (nodF) (Rhizobium leguminosarum bv. trifolii).